The following is a 297-amino-acid chain: MGFVKVVKNKQYFKRYQVKFKRRREGKTDYFARKRLIAQDKNKYNTPKYRLVVRFSNRDITCQVAYSRIEGDKILCAAYAHELPQYGVKVGLTNYAAAYCTGLLLARKLLSQLGLDKLYIGSTEVTGEEFNVKPVEDGPGAFRCYLDVGLMRTTTGARVFGAMKGAVDGGLNILHSTKRFPGFDSESKEFNADVHRQHIFGQHVAEYMRQLAEEDDEAYKRQFSQYIKLGLNADAIEGLYKKAHEAIRANPARKTVAKKAHPKKRWTEKKLTREQRQGKVAAAKAEWLKKIEAGEVE.

Residues 258–267 show a composition bias toward basic residues; that stretch reads KKAHPKKRWT. The interval 258 to 277 is disordered; the sequence is KKAHPKKRWTEKKLTREQRQ. A compositionally biased stretch (basic and acidic residues) spans 268–277; sequence EKKLTREQRQ.

The protein belongs to the universal ribosomal protein uL18 family. Component of the large ribosomal subunit (LSU).

The protein resides in the cytoplasm. It is found in the nucleus. In terms of biological role, component of the ribosome, a large ribonucleoprotein complex responsible for the synthesis of proteins in the cell. The small ribosomal subunit (SSU) binds messenger RNAs (mRNAs) and translates the encoded message by selecting cognate aminoacyl-transfer RNA (tRNA) molecules. The large subunit (LSU) contains the ribosomal catalytic site termed the peptidyl transferase center (PTC), which catalyzes the formation of peptide bonds, thereby polymerizing the amino acids delivered by tRNAs into a polypeptide chain. The nascent polypeptides leave the ribosome through a tunnel in the LSU and interact with protein factors that function in enzymatic processing, targeting, and the membrane insertion of nascent chains at the exit of the ribosomal tunnel. The sequence is that of Large ribosomal subunit protein uL18 (RPL5A) from Helianthus annuus (Common sunflower).